Consider the following 203-residue polypeptide: Pyrrolidone-carboxylate peptidase 1 (203 aa).

Catalysis depends on residues E78, C141, and H165.

Belongs to the peptidase C15 family. In terms of assembly, homotetramer.

The protein localises to the cytoplasm. The enzyme catalyses Release of an N-terminal pyroglutamyl group from a polypeptide, the second amino acid generally not being Pro.. In terms of biological role, removes 5-oxoproline from various penultimate amino acid residues except L-proline. In Caldanaerobacter subterraneus subsp. tengcongensis (strain DSM 15242 / JCM 11007 / NBRC 100824 / MB4) (Thermoanaerobacter tengcongensis), this protein is Pyrrolidone-carboxylate peptidase 1.